Here is a 406-residue protein sequence, read N- to C-terminus: 8-amino-7-oxononanoate synthase (406 aa).

A substrate-binding site is contributed by arginine 21. 112 to 113 (GY) lines the pyridoxal 5'-phosphate pocket. Histidine 137 is a binding site for substrate. Pyridoxal 5'-phosphate is bound by residues serine 183, histidine 211, and threonine 239. N6-(pyridoxal phosphate)lysine is present on lysine 242. Threonine 358 contributes to the substrate binding site.

This sequence belongs to the class-II pyridoxal-phosphate-dependent aminotransferase family. BioF subfamily. As to quaternary structure, homodimer. Pyridoxal 5'-phosphate is required as a cofactor.

It catalyses the reaction 6-carboxyhexanoyl-[ACP] + L-alanine + H(+) = (8S)-8-amino-7-oxononanoate + holo-[ACP] + CO2. The protein operates within cofactor biosynthesis; biotin biosynthesis. Functionally, catalyzes the decarboxylative condensation of pimeloyl-[acyl-carrier protein] and L-alanine to produce 8-amino-7-oxononanoate (AON), [acyl-carrier protein], and carbon dioxide. The sequence is that of 8-amino-7-oxononanoate synthase from Burkholderia orbicola (strain MC0-3).